Reading from the N-terminus, the 472-residue chain is GTPase Der (472 aa).

EngA-type G domains follow at residues 3–166 (PVIA…PEQE) and 176–349 (IRIG…DSAM). GTP is bound by residues 9-16 (GRPNVGKS), 56-60 (DTGGI), 118-121 (NKID), 182-189 (GRPNVGKS), 229-233 (DTAGV), and 294-297 (NKWD). Residues 350-434 (AKWSTNQLTT…PIRFEFRSGE (85 aa)) form the KH-like domain. The tract at residues 433 to 472 (GENPFAGKKNKLSPRQQKKKERLMKHVKKLKHKQKRKKSR) is disordered. Residues 440–472 (KKNKLSPRQQKKKERLMKHVKKLKHKQKRKKSR) are compositionally biased toward basic residues.

The protein belongs to the TRAFAC class TrmE-Era-EngA-EngB-Septin-like GTPase superfamily. EngA (Der) GTPase family. Associates with the 50S ribosomal subunit.

Functionally, GTPase that plays an essential role in the late steps of ribosome biogenesis. The polypeptide is GTPase Der (Hahella chejuensis (strain KCTC 2396)).